The chain runs to 31 residues: Cytochrome b6-f complex subunit 6 (31 aa).

A helical membrane pass occupies residues 3–23; sequence TITSYFGFLLAVLTITSGLFI.

It belongs to the PetL family. The 4 large subunits of the cytochrome b6-f complex are cytochrome b6, subunit IV (17 kDa polypeptide, PetD), cytochrome f and the Rieske protein, while the 4 small subunits are PetG, PetL, PetM and PetN. The complex functions as a dimer.

It is found in the plastid. It localises to the chloroplast thylakoid membrane. Component of the cytochrome b6-f complex, which mediates electron transfer between photosystem II (PSII) and photosystem I (PSI), cyclic electron flow around PSI, and state transitions. PetL is important for photoautotrophic growth as well as for electron transfer efficiency and stability of the cytochrome b6-f complex. In Lotus japonicus (Lotus corniculatus var. japonicus), this protein is Cytochrome b6-f complex subunit 6.